The following is a 179-amino-acid chain: Large ribosomal subunit protein uL5 (179 aa).

This sequence belongs to the universal ribosomal protein uL5 family. As to quaternary structure, part of the 50S ribosomal subunit; part of the 5S rRNA/L5/L18/L25 subcomplex. Contacts the 5S rRNA and the P site tRNA. Forms a bridge to the 30S subunit in the 70S ribosome.

Its function is as follows. This is one of the proteins that bind and probably mediate the attachment of the 5S RNA into the large ribosomal subunit, where it forms part of the central protuberance. In the 70S ribosome it contacts protein S13 of the 30S subunit (bridge B1b), connecting the 2 subunits; this bridge is implicated in subunit movement. Contacts the P site tRNA; the 5S rRNA and some of its associated proteins might help stabilize positioning of ribosome-bound tRNAs. The sequence is that of Large ribosomal subunit protein uL5 from Halothermothrix orenii (strain H 168 / OCM 544 / DSM 9562).